We begin with the raw amino-acid sequence, 452 residues long: Pup--protein ligase (452 aa).

Glu-9 contributes to the Mg(2+) binding site. Residue Arg-53 coordinates ATP. Position 55 (Tyr-55) interacts with Mg(2+). Catalysis depends on Asp-57, which acts as the Proton acceptor. Glu-63 lines the Mg(2+) pocket. Positions 66 and 419 each coordinate ATP.

This sequence belongs to the Pup ligase/Pup deamidase family. Pup-conjugating enzyme subfamily.

It catalyses the reaction ATP + [prokaryotic ubiquitin-like protein]-L-glutamate + [protein]-L-lysine = ADP + phosphate + N(6)-([prokaryotic ubiquitin-like protein]-gamma-L-glutamyl)-[protein]-L-lysine.. Its pathway is protein degradation; proteasomal Pup-dependent pathway. It participates in protein modification; protein pupylation. Functionally, catalyzes the covalent attachment of the prokaryotic ubiquitin-like protein modifier Pup to the proteasomal substrate proteins, thereby targeting them for proteasomal degradation. This tagging system is termed pupylation. The ligation reaction involves the side-chain carboxylate of the C-terminal glutamate of Pup and the side-chain amino group of a substrate lysine. The protein is Pup--protein ligase of Mycobacterium leprae (strain Br4923).